A 261-amino-acid polypeptide reads, in one-letter code: Triosephosphate isomerase (261 aa).

10–12 contacts substrate; that stretch reads NWK. The active-site Electrophile is the His100. Glu172 (proton acceptor) is an active-site residue. Substrate contacts are provided by residues Gly178, Ser218, and 239-240; that span reads GG.

This sequence belongs to the triosephosphate isomerase family. As to quaternary structure, homodimer.

Its subcellular location is the cytoplasm. The catalysed reaction is D-glyceraldehyde 3-phosphate = dihydroxyacetone phosphate. Its pathway is carbohydrate biosynthesis; gluconeogenesis. It participates in carbohydrate degradation; glycolysis; D-glyceraldehyde 3-phosphate from glycerone phosphate: step 1/1. Its function is as follows. Involved in the gluconeogenesis. Catalyzes stereospecifically the conversion of dihydroxyacetone phosphate (DHAP) to D-glyceraldehyde-3-phosphate (G3P). The protein is Triosephosphate isomerase of Mycolicibacterium paratuberculosis (strain ATCC BAA-968 / K-10) (Mycobacterium paratuberculosis).